Here is a 943-residue protein sequence, read N- to C-terminus: Leucine--tRNA ligase (943 aa).

A 'HIGH' region motif is present at residues 40 to 51 (PYPSGAGLHVGH). The short motif at 717 to 721 (KMSKS) is the 'KMSKS' region element. An ATP-binding site is contributed by lysine 720.

Belongs to the class-I aminoacyl-tRNA synthetase family.

Its subcellular location is the cytoplasm. The enzyme catalyses tRNA(Leu) + L-leucine + ATP = L-leucyl-tRNA(Leu) + AMP + diphosphate. This is Leucine--tRNA ligase from Bacteroides fragilis (strain YCH46).